Consider the following 306-residue polypeptide: UDP-3-O-acyl-N-acetylglucosamine deacetylase (306 aa).

Positions 79, 238, and 242 each coordinate Zn(2+). Histidine 265 functions as the Proton donor in the catalytic mechanism.

It belongs to the LpxC family. The cofactor is Zn(2+).

The enzyme catalyses a UDP-3-O-[(3R)-3-hydroxyacyl]-N-acetyl-alpha-D-glucosamine + H2O = a UDP-3-O-[(3R)-3-hydroxyacyl]-alpha-D-glucosamine + acetate. The protein operates within glycolipid biosynthesis; lipid IV(A) biosynthesis; lipid IV(A) from (3R)-3-hydroxytetradecanoyl-[acyl-carrier-protein] and UDP-N-acetyl-alpha-D-glucosamine: step 2/6. In terms of biological role, catalyzes the hydrolysis of UDP-3-O-myristoyl-N-acetylglucosamine to form UDP-3-O-myristoylglucosamine and acetate, the committed step in lipid A biosynthesis. The chain is UDP-3-O-acyl-N-acetylglucosamine deacetylase from Shewanella frigidimarina (strain NCIMB 400).